We begin with the raw amino-acid sequence, 207 residues long: Claudin-11 (207 aa).

A topological domain (cytoplasmic) is located at residue Met-1. Residues 2–22 form a helical membrane-spanning segment; sequence VATCLQVVGFVTSFVGWIGII. Topologically, residues 23 to 82 are extracellular; the sequence is VTTSTNDWVVTCGYTIPTCRKLDELGSKGLWADCVMATGLYHCKPLVDILILPGYVQACR. The chain crosses the membrane as a helical span at residues 83–103; it reads ALMIAASVLGLPAILLLLTVL. Topologically, residues 104 to 122 are cytoplasmic; it reads PCIRMGHEPGVAKYRRAQL. Residues 123–143 form a helical membrane-spanning segment; it reads AGVMLVLVALCAMVATIWFPV. The Extracellular segment spans residues 144-157; the sequence is CAHRETTIVSFGYS. Residues 158–178 form a helical membrane-spanning segment; the sequence is LYAGWIGAVLCLVGGCVIVCC. Topologically, residues 179-207 are cytoplasmic; that stretch reads AGDAQAFGENRFYYSSGSSSPTHAKSAHV. Ser-193, Ser-194, Ser-197, and Ser-198 each carry phosphoserine.

The protein belongs to the claudin family. In terms of assembly, interacts with tetraspanin-3/TSPAN3. Interacts with OCLN.

The protein resides in the cell junction. The protein localises to the tight junction. It localises to the cell membrane. In terms of biological role, plays a major role in tight junction-specific obliteration of the intercellular space, through calcium-independent cell-adhesion activity. This is Claudin-11 (CLDN11) from Bos taurus (Bovine).